The following is a 243-amino-acid chain: Phosphoribosylaminoimidazole-succinocarboxamide synthase (243 aa).

It belongs to the SAICAR synthetase family.

The catalysed reaction is 5-amino-1-(5-phospho-D-ribosyl)imidazole-4-carboxylate + L-aspartate + ATP = (2S)-2-[5-amino-1-(5-phospho-beta-D-ribosyl)imidazole-4-carboxamido]succinate + ADP + phosphate + 2 H(+). It functions in the pathway purine metabolism; IMP biosynthesis via de novo pathway; 5-amino-1-(5-phospho-D-ribosyl)imidazole-4-carboxamide from 5-amino-1-(5-phospho-D-ribosyl)imidazole-4-carboxylate: step 1/2. This chain is Phosphoribosylaminoimidazole-succinocarboxamide synthase, found in Lactiplantibacillus plantarum (strain ATCC BAA-793 / NCIMB 8826 / WCFS1) (Lactobacillus plantarum).